The sequence spans 58 residues: Conotoxin Ar5.4 (58 aa).

The propeptide occupies 1–20 (RIQSDLIRAALEDADMKNEK).

This sequence belongs to the conotoxin T superfamily. Post-translationally, contains 2 disulfide bonds that can be either 'C1-C3, C2-C4' or 'C1-C4, C2-C3', since these disulfide connectivities have been observed for conotoxins with cysteine framework V (for examples, see AC P0DQQ7 and AC P81755). In terms of tissue distribution, expressed by the venom duct.

Its subcellular location is the secreted. This is Conotoxin Ar5.4 from Conus arenatus (Sand-dusted cone).